Reading from the N-terminus, the 379-residue chain is UDP-N-acetylglucosamine--N-acetylmuramyl-(pentapeptide) pyrophosphoryl-undecaprenol N-acetylglucosamine transferase (379 aa).

UDP-N-acetyl-alpha-D-glucosamine is bound by residues 10 to 12 (TGG), Asn-124, and Arg-165. Positions 174-195 (TRDQGPGIRDQEKHMTDSTGPA) are disordered. 3 residues coordinate UDP-N-acetyl-alpha-D-glucosamine: Ser-211, Ile-266, and Gln-311.

The protein belongs to the glycosyltransferase 28 family. MurG subfamily.

Its subcellular location is the cell inner membrane. The catalysed reaction is di-trans,octa-cis-undecaprenyl diphospho-N-acetyl-alpha-D-muramoyl-L-alanyl-D-glutamyl-meso-2,6-diaminopimeloyl-D-alanyl-D-alanine + UDP-N-acetyl-alpha-D-glucosamine = di-trans,octa-cis-undecaprenyl diphospho-[N-acetyl-alpha-D-glucosaminyl-(1-&gt;4)]-N-acetyl-alpha-D-muramoyl-L-alanyl-D-glutamyl-meso-2,6-diaminopimeloyl-D-alanyl-D-alanine + UDP + H(+). Its pathway is cell wall biogenesis; peptidoglycan biosynthesis. Cell wall formation. Catalyzes the transfer of a GlcNAc subunit on undecaprenyl-pyrophosphoryl-MurNAc-pentapeptide (lipid intermediate I) to form undecaprenyl-pyrophosphoryl-MurNAc-(pentapeptide)GlcNAc (lipid intermediate II). The chain is UDP-N-acetylglucosamine--N-acetylmuramyl-(pentapeptide) pyrophosphoryl-undecaprenol N-acetylglucosamine transferase from Pelobacter propionicus (strain DSM 2379 / NBRC 103807 / OttBd1).